Here is a 455-residue protein sequence, read N- to C-terminus: Bifunctional protein GlmU (455 aa).

The tract at residues 1 to 228 (MTQPLHVIIL…AQEAEGANDP (228 aa)) is pyrophosphorylase. Residues 10 to 13 (LAAG), lysine 24, glutamine 76, 81 to 82 (GT), 103 to 105 (YGD), glycine 138, glutamate 153, asparagine 168, and asparagine 226 contribute to the UDP-N-acetyl-alpha-D-glucosamine site. Aspartate 105 contacts Mg(2+). Asparagine 226 contributes to the Mg(2+) binding site. The segment at 229–249 (WQLSQLERAWQRRAVRALCAQ) is linker. Residues 250–455 (GARVRDPARL…DGWKRPLKKS (206 aa)) are N-acetyltransferase. UDP-N-acetyl-alpha-D-glucosamine contacts are provided by arginine 332 and lysine 350. Catalysis depends on histidine 362, which acts as the Proton acceptor. 2 residues coordinate UDP-N-acetyl-alpha-D-glucosamine: tyrosine 365 and asparagine 376. Acetyl-CoA contacts are provided by residues alanine 379, 385–386 (NY), serine 404, alanine 422, and arginine 439.

The protein in the N-terminal section; belongs to the N-acetylglucosamine-1-phosphate uridyltransferase family. In the C-terminal section; belongs to the transferase hexapeptide repeat family. In terms of assembly, homotrimer. It depends on Mg(2+) as a cofactor.

The protein resides in the cytoplasm. The catalysed reaction is alpha-D-glucosamine 1-phosphate + acetyl-CoA = N-acetyl-alpha-D-glucosamine 1-phosphate + CoA + H(+). It carries out the reaction N-acetyl-alpha-D-glucosamine 1-phosphate + UTP + H(+) = UDP-N-acetyl-alpha-D-glucosamine + diphosphate. Its pathway is nucleotide-sugar biosynthesis; UDP-N-acetyl-alpha-D-glucosamine biosynthesis; N-acetyl-alpha-D-glucosamine 1-phosphate from alpha-D-glucosamine 6-phosphate (route II): step 2/2. The protein operates within nucleotide-sugar biosynthesis; UDP-N-acetyl-alpha-D-glucosamine biosynthesis; UDP-N-acetyl-alpha-D-glucosamine from N-acetyl-alpha-D-glucosamine 1-phosphate: step 1/1. It participates in bacterial outer membrane biogenesis; LPS lipid A biosynthesis. Functionally, catalyzes the last two sequential reactions in the de novo biosynthetic pathway for UDP-N-acetylglucosamine (UDP-GlcNAc). The C-terminal domain catalyzes the transfer of acetyl group from acetyl coenzyme A to glucosamine-1-phosphate (GlcN-1-P) to produce N-acetylglucosamine-1-phosphate (GlcNAc-1-P), which is converted into UDP-GlcNAc by the transfer of uridine 5-monophosphate (from uridine 5-triphosphate), a reaction catalyzed by the N-terminal domain. In Stenotrophomonas maltophilia (strain K279a), this protein is Bifunctional protein GlmU.